Consider the following 588-residue polypeptide: Endogenous retrovirus group K member 7 Env polyprotein (588 aa).

The segment at 355-375 (FIFTLIAVIMGLIAVTATAAV) is fusion peptide. A helical transmembrane segment spans residues 522 to 542 (IGSTTIINLILILVCLFCLLL).

Belongs to the beta type-B retroviral envelope protein family. HERV class-II K(HML-2) env subfamily. As to quaternary structure, the surface (SU) and transmembrane (TM) proteins form a heterodimer. SU and TM are attached by noncovalent interactions or by a labile interchain disulfide bond. Post-translationally, specific enzymatic cleavages in vivo yield the mature SU and TM proteins. Expressed in lung, placenta, testis and peripheral blood lymphocytes.

Its subcellular location is the virion. The protein localises to the cell membrane. Its function is as follows. Retroviral envelope proteins mediate receptor recognition and membrane fusion during early infection. Endogenous envelope proteins may have kept, lost or modified their original function during evolution. In terms of biological role, SU mediates receptor recognition. TM anchors the envelope heterodimer to the viral membrane through one transmembrane domain. The other hydrophobic domain, called fusion peptide, mediates fusion of the viral membrane with the target cell membrane. This Homo sapiens (Human) protein is Endogenous retrovirus group K member 7 Env polyprotein (ERVK-7).